A 448-amino-acid polypeptide reads, in one-letter code: MSKQLVSIIDVPKHIGEEITIGAWVANKSGKGKIAFLQLRDGTAFFQGVAFKPNFIEKFGEEEGLEKFDTIKHLSQETSIYVTGMVKEDERSKFGYELDITDIEVIGKSQDYPITPKEHGTDFLMDNRHLWLRSRKQMAIQQIRNAIIYATYDFFDKNGFIKFDSPILSSNAAEDSTELFETDYFGTPAFLSQSGQLYLEAGAMALGRVFDFGPVFRAEKSKTRRHLTEFWMMDAEYSFLSHDESLDLQEAYVKALIQGAIDRAPQALEILERDVDLLKKYIAEPFKRVSYDEAIDLLQAHENDEDTDYEHLEHGDDFGSPHETWISNYFGVPTFVVNYPASFKAFYMKPVPGNPERVLCADLLAPEGYGEIIGGSMREDDYDALVAKMEELGMDRSEYEFYLDLRKYGSVPHGGFGIGIERMVTFVAGTKHIREAIPFPRMLHRIKP.

The protein belongs to the class-II aminoacyl-tRNA synthetase family. In terms of assembly, homodimer.

It is found in the cytoplasm. The catalysed reaction is tRNA(Asn) + L-asparagine + ATP = L-asparaginyl-tRNA(Asn) + AMP + diphosphate + H(+). The polypeptide is Asparagine--tRNA ligase (Streptococcus thermophilus (strain ATCC BAA-250 / LMG 18311)).